Reading from the N-terminus, the 518-residue chain is Integrator complex subunit 14 (518 aa).

The 203-residue stretch at 2–204 folds into the VWFA domain; the sequence is PTVVVMDVSL…KNVQSMFGKL (203 aa). The Mg(2+) site is built by S10, S12, and T86. Residue K418 is modified to N6-acetyllysine.

This sequence belongs to the Integrator subunit 14 family. Component of the Integrator complex, composed of core subunits INTS1, INTS2, INTS3, INTS4, INTS5, INTS6, INTS7, INTS8, INTS9/RC74, INTS10, INTS11/CPSF3L, INTS12, INTS13, INTS14 and INTS15. The core complex associates with protein phosphatase 2A subunits PPP2CA and PPP2R1A, to form the Integrator-PP2A (INTAC) complex. INTS14 is part of the tail subcomplex, composed of INTS10, INTS13, INTS14 and INTS15.

It is found in the nucleus. Its function is as follows. Component of the integrator complex, a multiprotein complex that terminates RNA polymerase II (Pol II) transcription in the promoter-proximal region of genes. The integrator complex provides a quality checkpoint during transcription elongation by driving premature transcription termination of transcripts that are unfavorably configured for transcriptional elongation: the complex terminates transcription by (1) catalyzing dephosphorylation of the C-terminal domain (CTD) of Pol II subunit POLR2A/RPB1 and SUPT5H/SPT5, (2) degrading the exiting nascent RNA transcript via endonuclease activity and (3) promoting the release of Pol II from bound DNA. The integrator complex is also involved in terminating the synthesis of non-coding Pol II transcripts, such as enhancer RNAs (eRNAs), small nuclear RNAs (snRNAs), telomerase RNAs and long non-coding RNAs (lncRNAs). Within the integrator complex, INTS14 is part of the integrator tail module that acts as a platform for the recruitment of transcription factors at promoters. The chain is Integrator complex subunit 14 from Bos taurus (Bovine).